The following is a 314-amino-acid chain: tRNA uridine(34) hydroxylase (314 aa).

The Rhodanese domain maps to 140–234 (ARDDVILIDT…YLEETPPDES (95 aa)). The Cysteine persulfide intermediate role is filled by C194.

It belongs to the TrhO family.

It carries out the reaction uridine(34) in tRNA + AH2 + O2 = 5-hydroxyuridine(34) in tRNA + A + H2O. Catalyzes oxygen-dependent 5-hydroxyuridine (ho5U) modification at position 34 in tRNAs. In Acinetobacter baumannii (strain AYE), this protein is tRNA uridine(34) hydroxylase.